Here is a 273-residue protein sequence, read N- to C-terminus: Dermonecrotic toxin LspiSicTox-betaIE1ii (273 aa).

Histidine 5 is a catalytic residue. Mg(2+) is bound by residues glutamate 25 and aspartate 27. Histidine 41 functions as the Nucleophile in the catalytic mechanism. 2 disulfides stabilise this stretch: cysteine 45-cysteine 51 and cysteine 47-cysteine 189. Aspartate 85 lines the Mg(2+) pocket.

This sequence belongs to the arthropod phospholipase D family. Class II subfamily. Mg(2+) is required as a cofactor. In terms of tissue distribution, expressed by the venom gland.

The protein localises to the secreted. It catalyses the reaction an N-(acyl)-sphingosylphosphocholine = an N-(acyl)-sphingosyl-1,3-cyclic phosphate + choline. The catalysed reaction is an N-(acyl)-sphingosylphosphoethanolamine = an N-(acyl)-sphingosyl-1,3-cyclic phosphate + ethanolamine. It carries out the reaction a 1-acyl-sn-glycero-3-phosphocholine = a 1-acyl-sn-glycero-2,3-cyclic phosphate + choline. The enzyme catalyses a 1-acyl-sn-glycero-3-phosphoethanolamine = a 1-acyl-sn-glycero-2,3-cyclic phosphate + ethanolamine. Dermonecrotic toxins cleave the phosphodiester linkage between the phosphate and headgroup of certain phospholipids (sphingolipid and lysolipid substrates), forming an alcohol (often choline) and a cyclic phosphate. This toxin acts on sphingomyelin (SM). It may also act on ceramide phosphoethanolamine (CPE), lysophosphatidylcholine (LPC) and lysophosphatidylethanolamine (LPE), but not on lysophosphatidylserine (LPS), and lysophosphatidylglycerol (LPG). It acts by transphosphatidylation, releasing exclusively cyclic phosphate products as second products. Induces dermonecrosis, hemolysis, increased vascular permeability, edema, inflammatory response, and platelet aggregation. In Loxosceles spinulosa (Recluse spider), this protein is Dermonecrotic toxin LspiSicTox-betaIE1ii.